Reading from the N-terminus, the 407-residue chain is uncharacterized protein (407 aa).

Coiled coils occupy residues 96 to 130 (TDSI…FKNE) and 287 to 345 (MKCY…AKTS). A compositionally biased stretch (basic and acidic residues) spans 302 to 317 (EKRKDNLQKQNEEAAK). The tract at residues 302-394 (EKRKDNLQKQ…NMDPAINESD (93 aa)) is disordered. Positions 318 to 331 (ITKRKNRQEKRREK) are enriched in basic residues. Residues 344–370 (TSVSSIPDTSSTTTSTNSTPTNTKSNS) show a composition bias toward low complexity.

This is an uncharacterized protein from Acanthamoeba polyphaga (Amoeba).